Reading from the N-terminus, the 139-residue chain is ATP synthase epsilon chain, chloroplastic (139 aa).

This sequence belongs to the ATPase epsilon chain family. F-type ATPases have 2 components, CF(1) - the catalytic core - and CF(0) - the membrane proton channel. CF(1) has five subunits: alpha(3), beta(3), gamma(1), delta(1), epsilon(1). CF(0) has three main subunits: a, b and c.

It localises to the plastid. Its subcellular location is the chloroplast thylakoid membrane. Produces ATP from ADP in the presence of a proton gradient across the membrane. The polypeptide is ATP synthase epsilon chain, chloroplastic (Welwitschia mirabilis (Tree tumbo)).